The primary structure comprises 320 residues: Ferrochelatase (320 aa).

The Fe cation site is built by His-194 and Glu-272.

It belongs to the ferrochelatase family.

It localises to the cytoplasm. It carries out the reaction heme b + 2 H(+) = protoporphyrin IX + Fe(2+). Its pathway is porphyrin-containing compound metabolism; protoheme biosynthesis; protoheme from protoporphyrin-IX: step 1/1. In terms of biological role, catalyzes the ferrous insertion into protoporphyrin IX. This Desulfotalea psychrophila (strain LSv54 / DSM 12343) protein is Ferrochelatase.